Consider the following 314-residue polypeptide: Olfactory receptor 1E16 (314 aa).

The Extracellular portion of the chain corresponds to 1-29 (MTERNKTVISQFLLLGLPIPPEHQQLFYA). Asn5 carries N-linked (GlcNAc...) asparagine glycosylation. Residues 30 to 50 (LFLVMYLTTVLGNLIIIILII) form a helical membrane-spanning segment. Residues 51 to 57 (LDSHLHT) lie on the Cytoplasmic side of the membrane. Residues 58–78 (PMYLFLSNLSFSDLCFSSVTM) form a helical membrane-spanning segment. The Extracellular segment spans residues 79 to 97 (PKLLQNMQSQVPSIPYAGC). Cys97 and Cys179 are oxidised to a cystine. The helical transmembrane segment at 98–118 (LAQIYFFLFFGDLGNFLLVAM) threads the bilayer. Residues 119–143 (AYDRYVAICYPLHYTTIMSPRLCVS) lie on the Cytoplasmic side of the membrane. Residues 144–164 (LVVLSWVLTTFHAMLHTLLMA) traverse the membrane as a helical segment. Residues 165–196 (RLSFCEDNVIPHYFCDMSALLKLACSDTRVNE) are Extracellular-facing. A helical transmembrane segment spans residues 197 to 217 (VVIFIVASIFLVLPFALITMS). Residues 218–239 (YVRIVSSILKVPSSQGIYKAFS) lie on the Cytoplasmic side of the membrane. A helical transmembrane segment spans residues 240-260 (TCGSHLSVVSLFYGTVIGLYL). Residues 261 to 271 (SPSSNNSTVKD) lie on the Extracellular side of the membrane. 2 N-linked (GlcNAc...) asparagine glycosylation sites follow: Asn265 and Asn266. Residues 272–292 (TVMSLMYTVVTPMLNPFIYSL) traverse the membrane as a helical segment. At 293–314 (RNRDIKGALERVFCKRKIQLNL) the chain is on the cytoplasmic side.

It belongs to the G-protein coupled receptor 1 family. In terms of tissue distribution, olfactory epithelium.

The protein localises to the cell membrane. Odorant receptor. Activated by a lily-derived aldehyde as well as other odorants. May signal through an inositol 1,4,5-trisphosphate (IP3) second messenger system. The sequence is that of Olfactory receptor 1E16 from Mus musculus (Mouse).